Consider the following 452-residue polypeptide: Retinoid-inducible serine carboxypeptidase (452 aa).

The N-terminal stretch at 1 to 28 (MELSRRICLVRLWLLLLSFLLGFSAGSA) is a signal peptide. N-linked (GlcNAc...) asparagine glycosylation is found at asparagine 64, asparagine 102, and asparagine 126. The active site involves serine 167. Asparagine 192 and asparagine 362 each carry an N-linked (GlcNAc...) asparagine glycan. Residues aspartate 371 and histidine 431 contribute to the active site.

The protein belongs to the peptidase S10 family.

The protein localises to the secreted. Its function is as follows. May be involved in vascular wall and kidney homeostasis. The polypeptide is Retinoid-inducible serine carboxypeptidase (Scpep1) (Mus musculus (Mouse)).